Reading from the N-terminus, the 140-residue chain is Small ribosomal subunit protein uS12 (140 aa).

Pro59 is modified (hydroxyproline).

The protein belongs to the universal ribosomal protein uS12 family.

In Encephalitozoon cuniculi (strain GB-M1) (Microsporidian parasite), this protein is Small ribosomal subunit protein uS12 (RPS23).